Reading from the N-terminus, the 817-residue chain is MEEFLDKLPQMDLMRSEKMTLVQLIIPVESAHRSITYLGELGLLQFRDLNADKSPFQRTFANQVKRCGEMSRKLRFFKDQIDKAGLRCSPRLEIEPDIALGDLERQLADHEHEVLEMNSNSEKLRQTYNELLEFKIVLEKASGFLVSSNTHAIGEEIELHESTYSNNGFIETASLLEQEMNPGHSNQSGLRFISGIINKDKLLKFERMLFRATRGNMLFNQTTSDEEIMDPSTSEMVEKVVFVVFFSGEQARTKILKICEAFGANCYPVPEDTTKQRQLTREVLSRLSDLEATLDAGTRHRNNALNSVGYSLTNWITTVRREKAVYDTLNMLNFDVTKKCLVGEGWCPTFAKTQIHEVLQRATFDSSSQVGVIFHVMQAVESPPTYFRTNKLTNAFQEIIDAYGVARYQEANPAVYSVVTYPFLFAVMFGDWGHGLCLLLGALYLLARERKLSTQKLGSFMEMLFGGRYVILLMALFSIYCGLIYNEFFSVPFHIFGGSAYKCRDTTCSDAYTVGLIKYRDPYPFGVDPSWRGSRTELPYLNSLKMKMSILLGIAQMNLGLILSFFNARFFGSSLDIRYQFIPQMIFLNSLFGYLSLLIIIKWCTGSQADLYHVMIYMFLSPTEELGENELFWGQRPLQIVLLLLAFIAVPWMLFPKPFALRKIHMERFQGRTYGVLVSSEVDLDVEPDSARGGGHHEEEFNFSEIFVHQLIHSIEFVLGSVSNTASYLRLWALSLAHSELSTVFYEKVLLLAWGYENILIRLIGVAVFAFATAFILLMMETLSAFLHALRLHWVEFMGKFFNGDGYKFKPFSFALI.

At 1–422 the chain is on the cytoplasmic side; sequence MEEFLDKLPQ…PAVYSVVTYP (422 aa). Positions 97–133 form a coiled coil; it reads DIALGDLERQLADHEHEVLEMNSNSEKLRQTYNELLE. Residues 423–443 form a helical membrane-spanning segment; it reads FLFAVMFGDWGHGLCLLLGAL. At 444–468 the chain is on the vacuolar side; sequence YLLARERKLSTQKLGSFMEMLFGGR. Residues 469–489 form a helical membrane-spanning segment; the sequence is YVILLMALFSIYCGLIYNEFF. The Cytoplasmic segment spans residues 490-547; the sequence is SVPFHIFGGSAYKCRDTTCSDAYTVGLIKYRDPYPFGVDPSWRGSRTELPYLNSLKMK. The helical transmembrane segment at 548–568 threads the bilayer; the sequence is MSILLGIAQMNLGLILSFFNA. Residues 569–580 are Vacuolar-facing; sequence RFFGSSLDIRYQ. Residues 581 to 601 traverse the membrane as a helical segment; that stretch reads FIPQMIFLNSLFGYLSLLIII. Residues 602–639 are Cytoplasmic-facing; that stretch reads KWCTGSQADLYHVMIYMFLSPTEELGENELFWGQRPLQ. The chain crosses the membrane as a helical span at residues 640-660; sequence IVLLLLAFIAVPWMLFPKPFA. Residues 661–758 lie on the Vacuolar side of the membrane; sequence LRKIHMERFQ…VLLLAWGYEN (98 aa). The chain crosses the membrane as a helical span at residues 759-779; that stretch reads ILIRLIGVAVFAFATAFILLM. Residues 780 to 817 lie on the Cytoplasmic side of the membrane; the sequence is METLSAFLHALRLHWVEFMGKFFNGDGYKFKPFSFALI.

This sequence belongs to the V-ATPase 116 kDa subunit family. As to quaternary structure, V-ATPase is a heteromultimeric enzyme composed of a peripheral catalytic V1 complex (components A to H) attached to an integral membrane V0 proton pore complex (components: a, c, c'', d and e).

The protein resides in the vacuole membrane. It is found in the golgi apparatus. The protein localises to the trans-Golgi network membrane. Its function is as follows. Essential component of the vacuolar proton pump (V-ATPase), a multimeric enzyme that catalyzes the translocation of protons across the membranes. Required for assembly and activity of the V-ATPase. Required during cell expansion. This chain is V-type proton ATPase subunit a1, found in Arabidopsis thaliana (Mouse-ear cress).